Consider the following 211-residue polypeptide: Probable cytokinin riboside 5'-monophosphate phosphoribohydrolase LOGL3 (211 aa).

Residues Glu-84, 102-103 (RK), 119-125 (GYGTLEE), and Thr-131 contribute to the substrate site.

It belongs to the LOG family. Expressed in roots, leaves, stems, tiller buds, shoot apex, immature inflorescences and flowers.

The enzyme catalyses N(6)-(dimethylallyl)adenosine 5'-phosphate + H2O = N(6)-dimethylallyladenine + D-ribose 5-phosphate. It catalyses the reaction 9-ribosyl-trans-zeatin 5'-phosphate + H2O = trans-zeatin + D-ribose 5-phosphate. Functionally, cytokinin-activating enzyme working in the direct activation pathway. Phosphoribohydrolase that converts inactive cytokinin nucleotides to the biologically active free-base forms. This Oryza sativa subsp. japonica (Rice) protein is Probable cytokinin riboside 5'-monophosphate phosphoribohydrolase LOGL3 (LOGL3).